The primary structure comprises 215 residues: Putative ribosome biogenesis protein slx9-like (215 aa).

3 disordered regions span residues 49-121, 133-157, and 189-215; these read IIPS…GLGM, DSMK…MSLK, and LQNQ…LKRK.

This sequence belongs to the SLX9 family.

Its subcellular location is the nucleus. The protein localises to the nucleolus. Functionally, involved in ribosome biogenesis. The polypeptide is Putative ribosome biogenesis protein slx9-like (Dictyostelium discoideum (Social amoeba)).